A 556-amino-acid polypeptide reads, in one-letter code: F-box protein YDR131C (556 aa).

Residues M1–L44 form the F-box domain.

As to quaternary structure, interacts with SKP1. Component of the probable SCF(YDR131C) complex containing CDC53, SKP1, RBX1 and YDR131C.

It localises to the vacuole. Its pathway is protein modification; protein ubiquitination. Substrate recognition component of a SCF (SKP1-CUL1-F-box protein) E3 ubiquitin-protein ligase complex which mediates the ubiquitination and subsequent proteasomal degradation of target proteins. Probably recognizes and binds to phosphorylated target proteins. This is F-box protein YDR131C from Saccharomyces cerevisiae (strain ATCC 204508 / S288c) (Baker's yeast).